We begin with the raw amino-acid sequence, 224 residues long: LexA repressor (224 aa).

Positions 41–61 form a DNA-binding region, H-T-H motif; the sequence is MREIGDAVGLSSLSSVTHQLN. Catalysis depends on for autocatalytic cleavage activity residues serine 148 and lysine 185.

The protein belongs to the peptidase S24 family. Homodimer.

The catalysed reaction is Hydrolysis of Ala-|-Gly bond in repressor LexA.. Represses a number of genes involved in the response to DNA damage (SOS response), including recA and lexA. In the presence of single-stranded DNA, RecA interacts with LexA causing an autocatalytic cleavage which disrupts the DNA-binding part of LexA, leading to derepression of the SOS regulon and eventually DNA repair. This Leifsonia xyli subsp. xyli (strain CTCB07) protein is LexA repressor.